The primary structure comprises 348 residues: Holliday junction branch migration complex subunit RuvB (348 aa).

The tract at residues Met-1–Tyr-181 is large ATPase domain (RuvB-L). ATP is bound by residues Leu-20, Arg-21, Gly-62, Lys-65, Thr-66, Thr-67, Arg-171, Tyr-181, and Arg-218. Thr-66 is a binding site for Mg(2+). The tract at residues Glu-182–Glu-252 is small ATPAse domain (RuvB-S). A head domain (RuvB-H) region spans residues Pro-255–Asp-348. DNA-binding residues include Arg-310 and Arg-315. The disordered stretch occupies residues Val-329–Asp-348.

Belongs to the RuvB family. In terms of assembly, homohexamer. Forms an RuvA(8)-RuvB(12)-Holliday junction (HJ) complex. HJ DNA is sandwiched between 2 RuvA tetramers; dsDNA enters through RuvA and exits via RuvB. An RuvB hexamer assembles on each DNA strand where it exits the tetramer. Each RuvB hexamer is contacted by two RuvA subunits (via domain III) on 2 adjacent RuvB subunits; this complex drives branch migration. In the full resolvosome a probable DNA-RuvA(4)-RuvB(12)-RuvC(2) complex forms which resolves the HJ.

The protein localises to the cytoplasm. The enzyme catalyses ATP + H2O = ADP + phosphate + H(+). The RuvA-RuvB-RuvC complex processes Holliday junction (HJ) DNA during genetic recombination and DNA repair, while the RuvA-RuvB complex plays an important role in the rescue of blocked DNA replication forks via replication fork reversal (RFR). RuvA specifically binds to HJ cruciform DNA, conferring on it an open structure. The RuvB hexamer acts as an ATP-dependent pump, pulling dsDNA into and through the RuvAB complex. RuvB forms 2 homohexamers on either side of HJ DNA bound by 1 or 2 RuvA tetramers; 4 subunits per hexamer contact DNA at a time. Coordinated motions by a converter formed by DNA-disengaged RuvB subunits stimulates ATP hydrolysis and nucleotide exchange. Immobilization of the converter enables RuvB to convert the ATP-contained energy into a lever motion, pulling 2 nucleotides of DNA out of the RuvA tetramer per ATP hydrolyzed, thus driving DNA branch migration. The RuvB motors rotate together with the DNA substrate, which together with the progressing nucleotide cycle form the mechanistic basis for DNA recombination by continuous HJ branch migration. Branch migration allows RuvC to scan DNA until it finds its consensus sequence, where it cleaves and resolves cruciform DNA. In Desulfitobacterium hafniense (strain DSM 10664 / DCB-2), this protein is Holliday junction branch migration complex subunit RuvB.